The chain runs to 383 residues: MVKKILIVFGTRPEAIKMAPLVKIMENRNDVNFRVCVTGQHRQMLDQILNIFDIKPDYDLNIMQENQDLYDITLKILCGMKNVLNDFKPNIVLVHGDTTTASVTALAAFYQKIKIAHVEAGLRTYNICNPWPEEANRQIIGVLANIHFTPTVKSAENLIKEGKNKEGIFITGNTVIDALFYMTEKIKNDKTFKIKVLSSIGNEYKINDNKKFILVTGHRRENFGEGFLQICEALKIIAINNPDIDIVYPVHLNPNVQKPVKMLLLNISNIYLINPLKYEEFIYLMSKSYFIITDSGGIQEEAPSLGKPILVMRETTERPEAVEAGVVKLVGACKQNIIRESQKLIDDQDEYEKMSKAYNPYGDGRACEKIINILIKGKNNESI.

This sequence belongs to the UDP-N-acetylglucosamine 2-epimerase family.

It carries out the reaction UDP-N-acetyl-alpha-D-glucosamine = UDP-N-acetyl-alpha-D-mannosamine. The protein operates within capsule biogenesis; capsule polysaccharide biosynthesis. In terms of biological role, non-hydrolyzing C2-epimerase involved in the biosynthesis of capsular polysaccharides. Catalyzes the C2 epimerization of UDP-N-acetylglucosamine (UDP-GlcNAc) to form UDP-N-acetylmannosamine (UDP-ManNAc). In Campylobacter jejuni, this protein is UDP-N-acetylglucosamine 2-epimerase.